We begin with the raw amino-acid sequence, 207 residues long: Ribosomal RNA small subunit methyltransferase G (207 aa).

S-adenosyl-L-methionine contacts are provided by residues Gly73, Leu78, 124-125, and Arg139; that span reads VE.

The protein belongs to the methyltransferase superfamily. RNA methyltransferase RsmG family.

It localises to the cytoplasm. The enzyme catalyses guanosine(527) in 16S rRNA + S-adenosyl-L-methionine = N(7)-methylguanosine(527) in 16S rRNA + S-adenosyl-L-homocysteine. In terms of biological role, specifically methylates the N7 position of guanine in position 527 of 16S rRNA. The polypeptide is Ribosomal RNA small subunit methyltransferase G (Enterobacter sp. (strain 638)).